The chain runs to 429 residues: Protein ORF66 (429 aa).

It belongs to the herpesviridae UL49 family. As to quaternary structure, interacts with ORF34.

It is found in the host nucleus. The protein localises to the host cytoplasm. Participates in the expression of late viral mRNAs. This is Protein ORF66 (ORF66) from Homo sapiens (Human).